A 271-amino-acid polypeptide reads, in one-letter code: Shikimate kinase (271 aa).

83–93 is a binding site for ATP; sequence PIAMGLKSSSA.

The protein belongs to the GHMP kinase family. Archaeal shikimate kinase subfamily.

The protein resides in the cytoplasm. The catalysed reaction is shikimate + ATP = 3-phosphoshikimate + ADP + H(+). It participates in metabolic intermediate biosynthesis; chorismate biosynthesis; chorismate from D-erythrose 4-phosphate and phosphoenolpyruvate: step 5/7. The protein is Shikimate kinase of Thermococcus kodakarensis (strain ATCC BAA-918 / JCM 12380 / KOD1) (Pyrococcus kodakaraensis (strain KOD1)).